The following is a 185-amino-acid chain: Capsid protein (185 aa).

The segment at 136–185 (NAPILSTLPETTVVRRRDRGRSPRRRTPSPRRRRSQSPRRRRSQSRESQC) is disordered. Residues 149–178 (VRRRDRGRSPRRRTPSPRRRRSQSPRRRRS) show a composition bias toward basic residues. Ser157, Ser164, and Ser172 each carry phosphoserine; by host. Residues 157-163 (SPRRRTP) form a 1; half-length repeat. Residues 157–179 (SPRRRTPSPRRRRSQSPRRRRSQ) form a 3 X 8 AA repeats of S-P-R-R-R-[PR]-S-Q region. Positions 160–177 (RRTPSPRRRRSQSPRRRR) match the Bipartite nuclear localization signal motif. Tandem repeats lie at residues 164 to 171 (SPRRRRSQ) and 172 to 179 (SPRRRRSQ). The RNA binding stretch occupies residues 179 to 185 (QSRESQC).

The protein belongs to the orthohepadnavirus core antigen family. In terms of assembly, homodimerizes, then multimerizes. Interacts with cytosol exposed regions of viral L glycoprotein present in the reticulum-to-Golgi compartment. Interacts with human FLNB. Phosphorylated form interacts with host importin alpha; this interaction depends on the exposure of the NLS, which itself depends upon genome maturation and/or phosphorylation of the capsid protein. Interacts with host NUP153. In terms of processing, phosphorylated by host SRPK1, SRPK2, and maybe protein kinase C or GAPDH. Phosphorylation is critical for pregenomic RNA packaging. Protein kinase C phosphorylation is stimulated by HBx protein and may play a role in transport of the viral genome to the nucleus at the late step during the viral replication cycle.

Its subcellular location is the virion. The protein localises to the host cytoplasm. Its function is as follows. Self assembles to form an icosahedral capsid. Most capsids appear to be large particles with an icosahedral symmetry of T=4 and consist of 240 copies of capsid protein, though a fraction forms smaller T=3 particles consisting of 180 capsid proteins. Entering capsids are transported along microtubules to the nucleus. Phosphorylation of the capsid is thought to induce exposure of nuclear localization signal in the C-terminal portion of the capsid protein that allows binding to the nuclear pore complex via the importin (karyopherin-) alpha and beta. Capsids are imported in intact form through the nuclear pore into the nuclear basket, where it probably binds NUP153. Only capsids that contain the mature viral genome can release the viral DNA and capsid protein into the nucleoplasm. Immature capsids get stuck in the basket. Capsids encapsulate the pre-genomic RNA and the P protein. Pre-genomic RNA is reverse-transcribed into DNA while the capsid is still in the cytoplasm. The capsid can then either be directed to the nucleus, providing more genomes for transcription, or bud through the endoplasmic reticulum to provide new virions. The sequence is that of Capsid protein from Hepatitis B virus genotype A1 subtype adw (isolate Philippines/pFDW294/1988) (HBV-A).